The following is a 204-amino-acid chain: Guanylate kinase (204 aa).

In terms of domain architecture, Guanylate kinase-like spans 5 to 184 (GLLLVLSGPS…AVDHIKAIVD (180 aa)). Position 12–19 (12–19 (GPSGVGKG)) interacts with ATP.

The protein belongs to the guanylate kinase family.

The protein resides in the cytoplasm. The enzyme catalyses GMP + ATP = GDP + ADP. In terms of biological role, essential for recycling GMP and indirectly, cGMP. This Lactobacillus acidophilus (strain ATCC 700396 / NCK56 / N2 / NCFM) protein is Guanylate kinase.